The following is a 246-amino-acid chain: 1-(5-phosphoribosyl)-5-[(5-phosphoribosylamino)methylideneamino] imidazole-4-carboxamide isomerase (246 aa).

The active-site Proton acceptor is the aspartate 8. Aspartate 131 functions as the Proton donor in the catalytic mechanism.

Belongs to the HisA/HisF family.

It localises to the cytoplasm. It carries out the reaction 1-(5-phospho-beta-D-ribosyl)-5-[(5-phospho-beta-D-ribosylamino)methylideneamino]imidazole-4-carboxamide = 5-[(5-phospho-1-deoxy-D-ribulos-1-ylimino)methylamino]-1-(5-phospho-beta-D-ribosyl)imidazole-4-carboxamide. The protein operates within amino-acid biosynthesis; L-histidine biosynthesis; L-histidine from 5-phospho-alpha-D-ribose 1-diphosphate: step 4/9. This Polaromonas sp. (strain JS666 / ATCC BAA-500) protein is 1-(5-phosphoribosyl)-5-[(5-phosphoribosylamino)methylideneamino] imidazole-4-carboxamide isomerase.